Consider the following 508-residue polypeptide: ATP synthase subunit alpha (508 aa).

170-177 (GDRQTGKT) provides a ligand contact to ATP.

Belongs to the ATPase alpha/beta chains family. In terms of assembly, F-type ATPases have 2 components, CF(1) - the catalytic core - and CF(0) - the membrane proton channel. CF(1) has five subunits: alpha(3), beta(3), gamma(1), delta(1), epsilon(1). CF(0) has three main subunits: a(1), b(2) and c(9-12). The alpha and beta chains form an alternating ring which encloses part of the gamma chain. CF(1) is attached to CF(0) by a central stalk formed by the gamma and epsilon chains, while a peripheral stalk is formed by the delta and b chains.

It is found in the cell inner membrane. It catalyses the reaction ATP + H2O + 4 H(+)(in) = ADP + phosphate + 5 H(+)(out). Its function is as follows. Produces ATP from ADP in the presence of a proton gradient across the membrane. The alpha chain is a regulatory subunit. The chain is ATP synthase subunit alpha from Dictyoglomus turgidum (strain DSM 6724 / Z-1310).